Reading from the N-terminus, the 281-residue chain is Inositol diphosphatase SIW14 (281 aa).

The segment at 1 to 20 (MGLYQAKNDEGSDPKSSSKI) is disordered. Basic and acidic residues predominate over residues 7–20 (KNDEGSDPKSSSKI). Ser-94 is subject to Phosphoserine. The 151-residue stretch at 121–271 (NFSHVVGEIY…YDDDEIKRIA (151 aa)) folds into the Tyrosine-protein phosphatase domain. 3 residues coordinate 1D-myo-inositol hexakisphosphate: Asn-189, Ile-190, and His-193. The Phosphocysteine intermediate role is filled by Cys-214.

This sequence belongs to the protein-tyrosine phosphatase family. Atypical dual-specificity phosphatase Siw14-like subfamily. As to quaternary structure, monomer.

It is found in the cytoplasm. It catalyses the reaction 5-diphospho-1D-myo-inositol 1,2,3,4,6-pentakisphosphate + H2O = 1D-myo-inositol hexakisphosphate + phosphate + H(+). The enzyme catalyses 5-diphospho-1D-myo-inositol 1,3,4,6-tetrakisphosphate + H2O = 1D-myo-inositol 1,3,4,5,6-pentakisphosphate + phosphate + H(+). The catalysed reaction is 3,5-bis(diphospho)-1D-myo-inositol 1,2,4,6-tetrakisphosphate + H2O = 3-diphospho-1D-myo-inositol 1,2,4,5,6-pentakisphosphate + phosphate + 2 H(+). It carries out the reaction 1,5-bis(diphospho)-1D-myo-inositol 2,3,4,6-tetrakisphosphate + H2O = 1-diphospho-1D-myo-inositol 2,3,4,5,6-pentakisphosphate + phosphate + 2 H(+). It catalyses the reaction 6-diphospho-1D-myo-inositol pentakisphosphate + H2O = 1D-myo-inositol hexakisphosphate + phosphate + H(+). Its function is as follows. Selectively cleaves the beta-phosphate at the 5-position of soluble inositol pyrophosphates. Converts 5-diphosphoinositol tetrakisphosphate (5-PP-InsP(4)) into inositol pentakisphosphate (InsP(5)), 5-diphosphoinositol pentakisphosphate (5-PP-IP(5) or 5-InsP(7)) into inositol hexakisphosphate (IP(6) or InsP(6)), and 1,5-bisdiphosphoinositol tetrakisphosphate (1,5-PP-IP(5) or InsP(8)) into 1-diphosphoinositol pentakisphosphate (1-PP-IP(5) or 1-InsP(7)). Also has activity on 1,5-bis-diphosphoinositol 2,3,4,6-tetrakisphosphate (1,5-InsP(8)) and 3,5-InsP(8). Modulates inositol pyrophosphate metabolism that may have an influence in stress response. Plays a role in actin filament organization and endocytosis. Functions as a prion suppressing factor possibly due to its phosphatase activity against inositol pyrophosphates, which are signal transduction molecules involved in prion propagation. This chain is Inositol diphosphatase SIW14 (SIW14), found in Saccharomyces cerevisiae (strain ATCC 204508 / S288c) (Baker's yeast).